The following is a 1457-amino-acid chain: NBPF family member NBPF12 (1457 aa).

Positions 75-119 form a coiled coil; sequence RQFKEEKLAEQLKQAEELRQYKVLVHSQERELTQLREKLREGRDA. Positions 162 to 200 are disordered; sequence LSPENDEDEDEDVQVEEDEKVLESSAPREVQKAEESKVP. Over residues 165 to 181 the composition is skewed to acidic residues; the sequence is ENDEDEDEDVQVEEDEK. Residues 165-259 form the Olduvai 1 domain; that stretch reads ENDEDEDEDV…ECQDALNILP (95 aa). Residues 190–200 show a composition bias toward basic and acidic residues; it reads EVQKAEESKVP. A coiled-coil region spans residues 339-390; that stretch reads KSMLRNELQFKEEKLAEQLKQAEELRQYKVLVHSQERELTQLREKLREGRDA. The disordered stretch occupies residues 432–472; sequence KLSPENDEDEDEDVQVEEDEKVLESSSPREMQKAEESKVPE. The segment covering 436–452 has biased composition (acidic residues); the sequence is ENDEDEDEDVQVEEDEK. The Olduvai 2 domain maps to 436 to 530; sequence ENDEDEDEDV…ECQDALNILP (95 aa). Over residues 461 to 472 the composition is skewed to basic and acidic residues; sequence EMQKAEESKVPE. Residues 610–661 are a coiled coil; it reads KSMLRNELQFKEEKLAEQLKQAEELRQYKVLVHSQERELTQLREKLREGRDA. 9 Olduvai domains span residues 707–799, 800–871, 872–963, 966–1021, 1022–1114, 1115–1207, 1210–1265, 1266–1358, and 1359–1457; these read ENDN…HIIP, ENES…VDIG, RHRW…PSCP, SREL…LDVD, RIKK…RSKK, KRRR…PSCP, and KRRR…IFPQ. 2 disordered regions span residues 721–746 and 791–838; these read AEKV…EDSL and WEDA…GYST. Composition is skewed to acidic residues over residues 801 to 810 and 821 to 833; these read NESDDEEEEE and ESEE…ESWD. Residues 1100–1139 form a disordered region; it reads KKGKGKKRRGRRSKKKRRRGRKEGEEDQNPPCPRLSRELL. Residues 1102 to 1120 are compositionally biased toward basic residues; sequence GKGKKRRGRRSKKKRRRGR. The segment at 1344-1378 is disordered; sequence KKGKGKKRRGRRSKKKRRRGRKEGEEDQNPPCPRL. Residues 1346–1364 show a composition bias toward basic residues; the sequence is GKGKKRRGRRSKKKRRRGR.

The protein belongs to the NBPF family. Widely expressed with highest levels in brain, ovary, mammary gland, skin and adipose tissue. Also expressed in testis. Detected in a number of tumors including osteosarcoma, mammary carcinoma and hepatocellular carcinoma.

The protein localises to the cytoplasm. The sequence is that of NBPF family member NBPF12 from Homo sapiens (Human).